Here is a 166-residue protein sequence, read N- to C-terminus: Ubiquitin-conjugating enzyme E2 13 (166 aa).

In terms of domain architecture, UBC core spans 4-164; the sequence is QACLLLQKQL…VSRCVRKSQE (161 aa). Residue Cys89 is the Glycyl thioester intermediate of the active site.

This sequence belongs to the ubiquitin-conjugating enzyme family.

It carries out the reaction S-ubiquitinyl-[E1 ubiquitin-activating enzyme]-L-cysteine + [E2 ubiquitin-conjugating enzyme]-L-cysteine = [E1 ubiquitin-activating enzyme]-L-cysteine + S-ubiquitinyl-[E2 ubiquitin-conjugating enzyme]-L-cysteine.. It functions in the pathway protein modification; protein ubiquitination. Its function is as follows. Accepts the ubiquitin from the E1 complex and catalyzes its covalent attachment to other proteins. Involved in the formation of multiubiquitin chains. Signal the protein for selective degradation. This is Ubiquitin-conjugating enzyme E2 13 (UBC13) from Arabidopsis thaliana (Mouse-ear cress).